Here is a 214-residue protein sequence, read N- to C-terminus: Refilin-B (214 aa).

The tract at residues Met-1 to Gly-56 is disordered. Residues Ser-6 and Ser-26 each carry the phosphoserine modification.

This sequence belongs to the Refilin family. In terms of assembly, interacts with FLNA and FLNB.

It is found in the cytoplasm. Its subcellular location is the cytoskeleton. Its function is as follows. Involved in the regulation of the perinuclear actin network and nuclear shape through interaction with filamins. Plays an essential role in the formation of cartilaginous skeletal elements. In Homo sapiens (Human), this protein is Refilin-B.